Consider the following 378-residue polypeptide: 23S rRNA (uracil(747)-C(5))-methyltransferase RlmC (378 aa).

[4Fe-4S] cluster contacts are provided by Cys-3, Cys-11, Cys-14, and Cys-87. The S-adenosyl-L-methionine site is built by Gln-212, Phe-241, Glu-262, and Asn-309. The active-site Nucleophile is the Cys-336.

This sequence belongs to the class I-like SAM-binding methyltransferase superfamily. RNA M5U methyltransferase family. RlmC subfamily.

It catalyses the reaction uridine(747) in 23S rRNA + S-adenosyl-L-methionine = 5-methyluridine(747) in 23S rRNA + S-adenosyl-L-homocysteine + H(+). Catalyzes the formation of 5-methyl-uridine at position 747 (m5U747) in 23S rRNA. The chain is 23S rRNA (uracil(747)-C(5))-methyltransferase RlmC from Shewanella pealeana (strain ATCC 700345 / ANG-SQ1).